Reading from the N-terminus, the 318-residue chain is Melanocyte-stimulating hormone receptor (318 aa).

Residues 1-37 (MPMQGAQRKLLGSLNSTPTATSNLGLAANRTGAPCLE) are Extracellular-facing. Asn29 carries N-linked (GlcNAc...) asparagine glycosylation. The chain crosses the membrane as a helical span at residues 38 to 63 (LPIPNGLFLSLGLVSLVENVLVVAAI). Residues 64 to 72 (AKNRNLHSS) are Cytoplasmic-facing. A helical transmembrane segment spans residues 73-93 (MYCFICCLALSDLLVSGSNML). The Extracellular segment spans residues 94–118 (ETAVILLLEAGVLATRASVVQQLHN). Residues 119–140 (TIDVLTCSSMLCSLCFLGAIAV) traverse the membrane as a helical segment. Over 141 to 163 (DRYISIFYALRYHSIMTLPRAQR) the chain is Cytoplasmic. A helical membrane pass occupies residues 164-183 (AVAAIWVASVLSSTLFITYY). At 184-191 (DHAAVLLC) the chain is on the extracellular side. A helical transmembrane segment spans residues 192 to 211 (LMVFFLAMLVLMAVLYVHML). Topologically, residues 212–240 (ARARQHAQGIIRLHKRQPPAHKGFGLRGA) are cytoplasmic. The helical transmembrane segment at 241–266 (ATLTILLGIFFLCWGPFFLCLTLVVF) threads the bilayer. The Extracellular portion of the chain corresponds to 267 to 279 (CPQHLTCNCIFKN). The chain crosses the membrane as a helical span at residues 280 to 300 (FKVFLTLIICNTIIDPLIYAF). Residues 301–317 (RSQELRRMLKEVLGRGR) are Cytoplasmic-facing.

This sequence belongs to the G-protein coupled receptor 1 family. As to quaternary structure, interacts with MGRN1, but does not undergo MGRN1-mediated ubiquitination; this interaction competes with GNAS-binding and thus inhibits agonist-induced cAMP production. Interacts with OPN3; the interaction results in a decrease in MC1R-mediated cAMP signaling and ultimately a decrease in melanin production in melanocytes.

Its subcellular location is the cell membrane. Its function is as follows. Receptor for MSH (alpha, beta and gamma) and ACTH. The activity of this receptor is mediated by G proteins which activate adenylate cyclase. Mediates melanogenesis, the production of eumelanin (black/brown) and phaeomelanin (red/yellow), via regulation of cAMP signaling in melanocytes. This chain is Melanocyte-stimulating hormone receptor (MC1R), found in Leontopithecus rosalia (Golden lion tamarin).